Reading from the N-terminus, the 273-residue chain is Large ribosomal subunit protein uL2 (273 aa).

Residues 224–264 (AMNPVDHPHGGGEGRNFGKHPVTPWGIQTKGKKTRKNKRTD) form a disordered region. Positions 253 to 264 (KGKKTRKNKRTD) are enriched in basic residues.

The protein belongs to the universal ribosomal protein uL2 family. Part of the 50S ribosomal subunit. Forms a bridge to the 30S subunit in the 70S ribosome.

Its function is as follows. One of the primary rRNA binding proteins. Required for association of the 30S and 50S subunits to form the 70S ribosome, for tRNA binding and peptide bond formation. It has been suggested to have peptidyltransferase activity; this is somewhat controversial. Makes several contacts with the 16S rRNA in the 70S ribosome. In Buchnera aphidicola subsp. Acyrthosiphon pisum (strain 5A), this protein is Large ribosomal subunit protein uL2.